Consider the following 102-residue polypeptide: Protein 108 (102 aa).

The N-terminal stretch at 1–30 (MASVKSSSSSSSSSFISLLLLILLVIVLQS) is a signal peptide. Disulfide bonds link Cys-41-Cys-77, Cys-51-Cys-66, Cys-67-Cys-92, and Cys-79-Cys-99.

The protein belongs to the A9/FIL1 family. As to expression, stamen- and tapetum-specific.

The protein localises to the secreted. This chain is Protein 108, found in Solanum lycopersicum (Tomato).